The sequence spans 308 residues: MTELRRHAIDLDNFSATEIEEILETAESMREVLSREIKQVPALRGKTVVNMFFEESTRTRISFELAARALSANVVAFTARGSSVEKGESLVDTVRTLQALGADIIVMRHSQSGAPYLVARHFRGSLINAGDGRHAHPTQALLDLYTMQSRLGQIRDLHVVIVGDILHSRVVRSNLWGLTRLGARVTLCGPPTLIGPAAFWTATWPQVRIAYELDPLLPEADVVMALRLQKERMQSGLLPALREYTRIYGLTSERLARLPSHAIVMHPGPMNEGIEIFPEVATASPAVIEEQVTNGVAVRMALLYRMAG.

Positions 58 and 59 each coordinate carbamoyl phosphate. K86 serves as a coordination point for L-aspartate. Carbamoyl phosphate is bound by residues R108, H136, and Q139. Positions 169 and 227 each coordinate L-aspartate. Carbamoyl phosphate is bound by residues G268 and P269.

It belongs to the aspartate/ornithine carbamoyltransferase superfamily. ATCase family. As to quaternary structure, heterododecamer (2C3:3R2) of six catalytic PyrB chains organized as two trimers (C3), and six regulatory PyrI chains organized as three dimers (R2).

The catalysed reaction is carbamoyl phosphate + L-aspartate = N-carbamoyl-L-aspartate + phosphate + H(+). It participates in pyrimidine metabolism; UMP biosynthesis via de novo pathway; (S)-dihydroorotate from bicarbonate: step 2/3. Functionally, catalyzes the condensation of carbamoyl phosphate and aspartate to form carbamoyl aspartate and inorganic phosphate, the committed step in the de novo pyrimidine nucleotide biosynthesis pathway. The sequence is that of Aspartate carbamoyltransferase catalytic subunit from Chloroflexus aurantiacus (strain ATCC 29366 / DSM 635 / J-10-fl).